Reading from the N-terminus, the 330-residue chain is Malate dehydrogenase (330 aa).

NAD(+) is bound at residue 12–18 (GAAGQIG). Substrate contacts are provided by Arg-93 and Arg-99. NAD(+) contacts are provided by residues Asn-106, Gln-113, and 130-132 (VGN). Substrate is bound by residues Asn-132 and Arg-163. His-188 functions as the Proton acceptor in the catalytic mechanism.

This sequence belongs to the LDH/MDH superfamily. MDH type 2 family.

It catalyses the reaction (S)-malate + NAD(+) = oxaloacetate + NADH + H(+). Catalyzes the reversible oxidation of malate to oxaloacetate. This is Malate dehydrogenase from Legionella pneumophila (strain Lens).